Reading from the N-terminus, the 155-residue chain is Cathelicidin-1 (155 aa).

The first 29 residues, 1-29, serve as a signal peptide directing secretion; sequence METQRASLSLGRCSLWLLLLGLALPSASA. Glutamine 30 bears the Pyrrolidone carboxylic acid mark. A propeptide spanning residues 30 to 143 is cleaved from the precursor; sequence QVLSYREAVL…KQPWAPPQAA (114 aa). Disulfide bonds link cysteine 85-cysteine 96, cysteine 107-cysteine 124, and cysteine 146-cysteine 154.

It belongs to the cathelicidin family.

The protein resides in the secreted. Its function is as follows. Potent microbicidal activity; active against S.aureus and E.coli. This Ovis aries (Sheep) protein is Cathelicidin-1 (CATHL1A).